Reading from the N-terminus, the 72-residue chain is uncharacterized protein (72 aa).

This is an uncharacterized protein from Mycobacterium tuberculosis (strain ATCC 25618 / H37Rv).